A 185-amino-acid polypeptide reads, in one-letter code: Ribosome-recycling factor (185 aa).

Belongs to the RRF family.

It localises to the cytoplasm. In terms of biological role, responsible for the release of ribosomes from messenger RNA at the termination of protein biosynthesis. May increase the efficiency of translation by recycling ribosomes from one round of translation to another. In Salinispora tropica (strain ATCC BAA-916 / DSM 44818 / JCM 13857 / NBRC 105044 / CNB-440), this protein is Ribosome-recycling factor.